The primary structure comprises 62 residues: Large ribosomal subunit protein bL28 (62 aa).

Belongs to the bacterial ribosomal protein bL28 family.

The polypeptide is Large ribosomal subunit protein bL28 (Caldanaerobacter subterraneus subsp. tengcongensis (strain DSM 15242 / JCM 11007 / NBRC 100824 / MB4) (Thermoanaerobacter tengcongensis)).